We begin with the raw amino-acid sequence, 501 residues long: Glycerol kinase (501 aa).

Residue threonine 12 coordinates ADP. ATP is bound by residues threonine 12, threonine 13, and serine 14. A sn-glycerol 3-phosphate-binding site is contributed by threonine 12. Position 16 (arginine 16) interacts with ADP. Residues arginine 82, glutamate 83, tyrosine 135, and aspartate 244 each contribute to the sn-glycerol 3-phosphate site. Glycerol contacts are provided by arginine 82, glutamate 83, tyrosine 135, aspartate 244, and glutamine 245. Residues threonine 266, glycine 309, glycine 409, and asparagine 413 each contribute to the ADP site. 3 residues coordinate ATP: threonine 266, glycine 309, and glycine 409.

The protein belongs to the FGGY kinase family.

It carries out the reaction glycerol + ATP = sn-glycerol 3-phosphate + ADP + H(+). Its pathway is polyol metabolism; glycerol degradation via glycerol kinase pathway; sn-glycerol 3-phosphate from glycerol: step 1/1. Its activity is regulated as follows. Inhibited by fructose 1,6-bisphosphate (FBP). Its function is as follows. Key enzyme in the regulation of glycerol uptake and metabolism. Catalyzes the phosphorylation of glycerol to yield sn-glycerol 3-phosphate. In Coxiella burnetii (strain Dugway 5J108-111), this protein is Glycerol kinase.